Reading from the N-terminus, the 384-residue chain is uncharacterized protein (384 aa).

Positions Lys-327–Lys-339 are enriched in basic residues. Residues Lys-327–Asp-358 are disordered.

This is an uncharacterized protein from Magallana gigas (Pacific oyster).